Here is a 220-residue protein sequence, read N- to C-terminus: GTP cyclohydrolase 1 (220 aa).

Zn(2+)-binding residues include cysteine 109, histidine 112, and cysteine 180.

It belongs to the GTP cyclohydrolase I family. In terms of assembly, homomer.

The catalysed reaction is GTP + H2O = 7,8-dihydroneopterin 3'-triphosphate + formate + H(+). It functions in the pathway cofactor biosynthesis; 7,8-dihydroneopterin triphosphate biosynthesis; 7,8-dihydroneopterin triphosphate from GTP: step 1/1. The protein is GTP cyclohydrolase 1 of Edwardsiella ictaluri (strain 93-146).